The sequence spans 218 residues: Sodium channel regulatory subunit beta-1 (218 aa).

The signal sequence occupies residues 1–18 (MGRLLALVVGAALVSSAC). Over 19-157 (GGCVEVDSET…DKANRDMASI (139 aa)) the chain is Extracellular. 2 cysteine pairs are disulfide-bonded: Cys21/Cys43 and Cys40/Cys121. The Ig-like C2-type domain occupies 22–150 (VEVDSETEAV…KIHIEVVDKA (129 aa)). N-linked (GlcNAc...) asparagine glycosylation is found at Asn93, Asn110, Asn114, and Asn135. A helical membrane pass occupies residues 158 to 179 (VSEIMMYVLIVVLTIWLVAEMI). Residues 180–218 (YCYKKIAAATETAAQENASEYLAITSESKENCTGVQVAE) lie on the Cytoplasmic side of the membrane.

It belongs to the sodium channel auxiliary subunit SCN1B (TC 8.A.17) family. In terms of assembly, voltage-gated sodium (Nav) channel consists of an ion-conducting pore-forming alpha subunit functional on its own that is regulated by one or more beta subunits. Interacts with SCN1A; regulatory subunit of SCN1A/Nav1.1. Interacts with SCN3A; regulatory subunit of SCN3A/Nav1.3. Interacts with SCN4A; regulatory subunit of SCN4A/Nav1.4. Interacts with SCN5A; regulatory subunit of SCN5A/Nav1.5. Interacts with SCN8A; regulatory subunit of SCN8A/Nav1.6. Interacts with SCN9A; regulatory subunit of SCN9A/Nav1.7. Interacts with SCN10A; regulatory subunit of SCN10A/Nav1.8. Interacts with NFASC. Interacts with TMEM65. The overall expression of isoform 1 and isoform 2 is very similar. Isoform 1 is abundantly expressed in skeletal muscle, heart and brain. Isoform 2 is highly expressed in brain and skeletal muscle and present at a very low level in heart, placenta, lung, liver, kidney and pancreas. In brain, isoform 2 is most abundant in the cerebellum, followed by the cerebral cortex and occipital lobe, while isoform 1 levels are higher in the cortex compared to the cerebellum. Isoform 2 is expressed in many regions of the brain, including cerebellar Purkinje cells, cortex pyramidal neurons and many of the neuronal fibers throughout the brain (at protein level). Also detected in dorsal root ganglion, in fibers of the spinal nerve and in cortical neurons and their processes (at protein level).

The protein resides in the cell membrane. The protein localises to the perikaryon. It is found in the cell projection. Its subcellular location is the axon. It localises to the secreted. Regulatory subunit of multiple voltage-gated sodium (Nav) channels directly mediating the depolarization of excitable membranes. Navs, also called VGSCs (voltage-gated sodium channels) or VDSCs (voltage-dependent sodium channels), operate by switching between closed and open conformations depending on the voltage difference across the membrane. In the open conformation they allow Na(+) ions to selectively pass through the pore, along their electrochemical gradient. The influx of Na+ ions provokes membrane depolarization, initiating the propagation of electrical signals throughout cells and tissues. The accessory beta subunits participate in localization and functional modulation of the Nav channels. Modulates the activity of SCN1A/Nav1.1, SCN2A/Nav1.2, SCN3A/Nav1.3, SCN4A/Nav1.4, SCN5A/Nav1.5, SCN8A/Nav1.6, SCN9A/Nav1.7 and SCN10A/Nav1.8. In terms of biological role, cell adhesion molecule that plays a critical role in neuronal migration and pathfinding during brain development. Stimulates neurite outgrowth. Has no regulatory function on the SCN2A sodium channel complex. This is Sodium channel regulatory subunit beta-1 from Homo sapiens (Human).